We begin with the raw amino-acid sequence, 139 residues long: Nucleoside diphosphate kinase (139 aa).

Residues Lys11, Phe59, Arg87, Thr93, Arg104, and Asn114 each contribute to the ATP site. His117 functions as the Pros-phosphohistidine intermediate in the catalytic mechanism.

It belongs to the NDK family. Homotetramer. Mg(2+) is required as a cofactor.

The protein localises to the cytoplasm. The enzyme catalyses a 2'-deoxyribonucleoside 5'-diphosphate + ATP = a 2'-deoxyribonucleoside 5'-triphosphate + ADP. It catalyses the reaction a ribonucleoside 5'-diphosphate + ATP = a ribonucleoside 5'-triphosphate + ADP. Its function is as follows. Major role in the synthesis of nucleoside triphosphates other than ATP. The ATP gamma phosphate is transferred to the NDP beta phosphate via a ping-pong mechanism, using a phosphorylated active-site intermediate. This Wolbachia pipientis wMel protein is Nucleoside diphosphate kinase.